Reading from the N-terminus, the 151-residue chain is FAD synthase (151 aa).

Residues 21–22, 26–29, and aspartate 104 contribute to the ATP site; these read TF and HPGH.

It belongs to the archaeal FAD synthase family. Homodimer. A divalent metal cation is required as a cofactor.

It carries out the reaction FMN + ATP + H(+) = FAD + diphosphate. It functions in the pathway cofactor biosynthesis; FAD biosynthesis; FAD from FMN: step 1/1. Functionally, catalyzes the transfer of the AMP portion of ATP to flavin mononucleotide (FMN) to produce flavin adenine dinucleotide (FAD) coenzyme. The protein is FAD synthase of Methanosarcina mazei (strain ATCC BAA-159 / DSM 3647 / Goe1 / Go1 / JCM 11833 / OCM 88) (Methanosarcina frisia).